A 256-amino-acid polypeptide reads, in one-letter code: 5-keto-4-deoxy-D-glucarate aldolase (256 aa).

His-50 functions as the Proton acceptor in the catalytic mechanism. Position 151 (Gln-151) interacts with substrate. Residue Glu-153 coordinates Mg(2+). Ser-178 and Asp-179 together coordinate substrate. Position 179 (Asp-179) interacts with Mg(2+).

Belongs to the HpcH/HpaI aldolase family. KDGluc aldolase subfamily. As to quaternary structure, homohexamer; trimer of dimers. Mg(2+) serves as cofactor.

It carries out the reaction 5-dehydro-4-deoxy-D-glucarate = 2-hydroxy-3-oxopropanoate + pyruvate. The enzyme catalyses 2-dehydro-3-deoxy-D-glucarate = 2-hydroxy-3-oxopropanoate + pyruvate. It functions in the pathway carbohydrate acid metabolism; galactarate degradation; D-glycerate from galactarate: step 2/3. Functionally, catalyzes the reversible retro-aldol cleavage of both 5-keto-4-deoxy-D-glucarate and 2-keto-3-deoxy-D-glucarate to pyruvate and tartronic semialdehyde. This is 5-keto-4-deoxy-D-glucarate aldolase from Escherichia fergusonii (strain ATCC 35469 / DSM 13698 / CCUG 18766 / IAM 14443 / JCM 21226 / LMG 7866 / NBRC 102419 / NCTC 12128 / CDC 0568-73).